Consider the following 364-residue polypeptide: Acidic fibroblast growth factor intracellular-binding protein (364 aa).

Thr2 bears the N-acetylthreonine mark.

As to quaternary structure, binds to internalized FGF1; this interaction is increased in the presence of CSNKB, suggesting a possible cooperative interaction between CSNKB and FIBP in binding to FGF1. Highly expressed in heart, skeletal muscle and pancreas. Expressed at lower levels in brain. Also found in placenta, liver and kidney.

Its subcellular location is the nucleus. The protein resides in the endomembrane system. Its function is as follows. May be involved in mitogenic function of FGF1. May mediate with IER2 FGF-signaling in the establishment of laterality in the embryo. This is Acidic fibroblast growth factor intracellular-binding protein (FIBP) from Homo sapiens (Human).